A 91-amino-acid chain; its full sequence is Probable Fe(2+)-trafficking protein (91 aa).

Belongs to the Fe(2+)-trafficking protein family.

Functionally, could be a mediator in iron transactions between iron acquisition and iron-requiring processes, such as synthesis and/or repair of Fe-S clusters in biosynthetic enzymes. The polypeptide is Probable Fe(2+)-trafficking protein (Tolumonas auensis (strain DSM 9187 / NBRC 110442 / TA 4)).